The chain runs to 431 residues: Urokinase-type plasminogen activator (431 aa).

The N-terminal stretch at 1–20 is a signal peptide; sequence MRALLARLLLCVLVVSDSKG. Residues 27-63 enclose the EGF-like domain; the sequence is VPSNCDCLNGGTCVSNKYFSNIHWCNCPKKFGGQHCE. 6 disulfides stabilise this stretch: cysteine 31–cysteine 39, cysteine 33–cysteine 51, cysteine 53–cysteine 62, cysteine 70–cysteine 151, cysteine 91–cysteine 133, and cysteine 122–cysteine 146. The binds urokinase plasminogen activator surface receptor stretch occupies residues 34-57; the sequence is LNGGTCVSNKYFSNIHWCNCPKKF. The 83-residue stretch at 69–151 folds into the Kringle domain; the sequence is TCYEGNGHFY…LVQECMVHDC (83 aa). Residues 152 to 178 form a connecting peptide region; the sequence is ADGKKPSSPPEELKFQCGQKTLRPRFK. Residue serine 158 is modified to Phosphoserine. Cystine bridges form between cysteine 168–cysteine 299, cysteine 209–cysteine 225, cysteine 217–cysteine 288, cysteine 313–cysteine 382, cysteine 345–cysteine 361, and cysteine 372–cysteine 400. In terms of domain architecture, Peptidase S1 spans 179 to 424; it reads IVGGEFTTIE…FLPWIRSHTK (246 aa). Residues histidine 224 and aspartate 275 each act as charge relay system in the active site. Asparagine 322 carries an N-linked (GlcNAc...) asparagine glycan. Serine 323 is modified (phosphoserine). Serine 376 acts as the Charge relay system in catalysis.

It belongs to the peptidase S1 family. Found in high and low molecular mass forms. Each consists of two chains, A and B. The high molecular mass form contains a long chain A which is cleaved to yield a short chain A. Forms heterodimer with SERPINA5. Binds LRP1B; binding is followed by internalization and degradation. Interacts with MRC2. Interacts with PLAUR. In complex with SERPINE1, interacts with PLAUR/uPAR. Interacts with SORL1 and LRP1, either alone or in complex with SERPINE1; these interactions are abolished in the presence of LRPAP1/RAP. The ternary complex composed of PLAUR-PLAU-PAI1 also interacts with SORLA. Post-translationally, phosphorylation of Ser-158 and Ser-323 abolishes proadhesive ability but does not interfere with receptor binding. In terms of processing, produced as an inactive single-chain protein (pro-uPA or sc-uPA), is processed into the active disulfide-linked two-chain form of PLAU/uPA by a proteolytic event mediated, at least, by TMPRSS4.

The protein resides in the secreted. It carries out the reaction Specific cleavage of Arg-|-Val bond in plasminogen to form plasmin.. Inhibited by SERPINA5. Inhibited by SERPINE1. Functionally, specifically cleaves the zymogen plasminogen to form the active enzyme plasmin. This chain is Urokinase-type plasminogen activator (PLAU), found in Pongo abelii (Sumatran orangutan).